A 138-amino-acid polypeptide reads, in one-letter code: Large ribosomal subunit protein uL14 (138 aa).

This sequence belongs to the universal ribosomal protein uL14 family. In terms of assembly, part of the 50S ribosomal subunit. Forms a cluster with proteins L3 and L24e, part of which may contact the 16S rRNA in 2 intersubunit bridges.

Binds to 23S rRNA. Forms part of two intersubunit bridges in the 70S ribosome. The polypeptide is Large ribosomal subunit protein uL14 (Hyperthermus butylicus (strain DSM 5456 / JCM 9403 / PLM1-5)).